Here is a 119-residue protein sequence, read N- to C-terminus: Basic phospholipase A2 acanthin-1 (119 aa).

7 disulfide bridges follow: cysteine 11-cysteine 71, cysteine 27-cysteine 118, cysteine 29-cysteine 45, cysteine 44-cysteine 99, cysteine 51-cysteine 92, cysteine 60-cysteine 85, and cysteine 78-cysteine 90. 3 residues coordinate Ca(2+): tyrosine 28, glycine 30, and glycine 32. Histidine 48 is an active-site residue. Aspartate 49 is a Ca(2+) binding site. Aspartate 93 is a catalytic residue.

The cofactor is Ca(2+). Expressed by the venom gland.

Its subcellular location is the secreted. The enzyme catalyses a 1,2-diacyl-sn-glycero-3-phosphocholine + H2O = a 1-acyl-sn-glycero-3-phosphocholine + a fatty acid + H(+). In terms of biological role, snake venom phospholipase A2 (PLA2) that potently inhibits ADP-(IC(50)=10 nM) and collagen-induced (IC(50)=7 nM) platelet aggregation when tested on human whole blood. PLA2 catalyzes the calcium-dependent hydrolysis of the 2-acyl groups in 3-sn-phosphoglycerides. In Acanthophis antarcticus (Common death adder), this protein is Basic phospholipase A2 acanthin-1.